The following is a 215-amino-acid chain: Probable transaldolase (215 aa).

The active-site Schiff-base intermediate with substrate is lysine 83.

Belongs to the transaldolase family. Type 3B subfamily.

Its subcellular location is the cytoplasm. The enzyme catalyses D-sedoheptulose 7-phosphate + D-glyceraldehyde 3-phosphate = D-erythrose 4-phosphate + beta-D-fructose 6-phosphate. Its pathway is carbohydrate degradation; pentose phosphate pathway; D-glyceraldehyde 3-phosphate and beta-D-fructose 6-phosphate from D-ribose 5-phosphate and D-xylulose 5-phosphate (non-oxidative stage): step 2/3. In terms of biological role, transaldolase is important for the balance of metabolites in the pentose-phosphate pathway. The chain is Probable transaldolase from Desulforapulum autotrophicum (strain ATCC 43914 / DSM 3382 / VKM B-1955 / HRM2) (Desulfobacterium autotrophicum).